A 113-amino-acid chain; its full sequence is Ribulose bisphosphate carboxylase small subunit (113 aa).

Belongs to the RuBisCO small chain family. As to quaternary structure, heterohexadecamer of 8 large and 8 small subunits. Forms a CsoS2-CsoS1-RuBisCO complex.

Its subcellular location is the carboxysome. Its function is as follows. RuBisCO catalyzes two reactions: the carboxylation of D-ribulose 1,5-bisphosphate, the primary event in carbon dioxide fixation, as well as the oxidative fragmentation of the pentose substrate in the photorespiration process. Both reactions occur simultaneously and in competition at the same active site. Although the small subunit is not catalytic it is essential for maximal activity. This Prochlorococcus marinus (strain MIT 9313) protein is Ribulose bisphosphate carboxylase small subunit.